A 126-amino-acid chain; its full sequence is Fluoride-specific ion channel FluC (126 aa).

4 helical membrane passes run 2 to 22 (LITVLNVALGGAIGASCRYLI), 37 to 57 (VGVLGVNILGSALMGAFVVLA), 65 to 85 (LSPFVMTGVLGGFTTFSAFSL), and 99 to 119 (AALYIGLSAGLSIAALALGMM). Na(+) is bound by residues Gly-75 and Thr-78.

It belongs to the fluoride channel Fluc/FEX (TC 1.A.43) family.

Its subcellular location is the cell inner membrane. The catalysed reaction is fluoride(in) = fluoride(out). Na(+) is not transported, but it plays an essential structural role and its presence is essential for fluoride channel function. Fluoride-specific ion channel. Important for reducing fluoride concentration in the cell, thus reducing its toxicity. In Ruegeria sp. (strain TM1040) (Silicibacter sp.), this protein is Fluoride-specific ion channel FluC.